Reading from the N-terminus, the 340-residue chain is Alcohol dehydrogenase (340 aa).

C40 and H63 together coordinate Zn(2+).

Belongs to the zinc-containing alcohol dehydrogenase family. Zn(2+) is required as a cofactor.

It carries out the reaction a primary alcohol + NAD(+) = an aldehyde + NADH + H(+). The enzyme catalyses a secondary alcohol + NAD(+) = a ketone + NADH + H(+). The polypeptide is Alcohol dehydrogenase (adhA) (Rhizobium meliloti (strain 1021) (Ensifer meliloti)).